The following is a 581-amino-acid chain: Arginine--tRNA ligase (581 aa).

The short motif at 126 to 136 (PNLAKEMHVGH) is the 'HIGH' region element.

The protein belongs to the class-I aminoacyl-tRNA synthetase family. In terms of assembly, monomer.

It is found in the cytoplasm. It carries out the reaction tRNA(Arg) + L-arginine + ATP = L-arginyl-tRNA(Arg) + AMP + diphosphate. In Shewanella frigidimarina (strain NCIMB 400), this protein is Arginine--tRNA ligase.